The chain runs to 238 residues: Large ribosomal subunit protein uL2 (238 aa).

The disordered stretch occupies residues 199–238 (PHGGGLHQSVSRSSTVARNTPPGRKVGHIAARRTGRRDRK). Residues 206–216 (QSVSRSSTVAR) are compositionally biased toward polar residues. Over residues 223–238 (KVGHIAARRTGRRDRK) the composition is skewed to basic residues.

The protein belongs to the universal ribosomal protein uL2 family. Part of the 50S ribosomal subunit. Forms a bridge to the 30S subunit in the 70S ribosome.

One of the primary rRNA binding proteins. Required for association of the 30S and 50S subunits to form the 70S ribosome, for tRNA binding and peptide bond formation. It has been suggested to have peptidyltransferase activity; this is somewhat controversial. Makes several contacts with the 16S rRNA in the 70S ribosome. In Metallosphaera sedula (strain ATCC 51363 / DSM 5348 / JCM 9185 / NBRC 15509 / TH2), this protein is Large ribosomal subunit protein uL2.